Consider the following 142-residue polypeptide: Transcriptional regulator MraZ (142 aa).

SpoVT-AbrB domains lie at 5 to 47 (EYPY…PLPG) and 76 to 119 (ASKA…NPQR).

Belongs to the MraZ family. In terms of assembly, forms oligomers.

It is found in the cytoplasm. The protein resides in the nucleoid. This chain is Transcriptional regulator MraZ, found in Deinococcus radiodurans (strain ATCC 13939 / DSM 20539 / JCM 16871 / CCUG 27074 / LMG 4051 / NBRC 15346 / NCIMB 9279 / VKM B-1422 / R1).